The following is a 645-amino-acid chain: 1,4-alpha-glucan branching enzyme GlgB (645 aa).

Asp-309 (nucleophile) is an active-site residue. The active-site Proton donor is the Glu-352. The tract at residues 619 to 645 is disordered; it reads VKTRKGSKKQDGSKTKVRSNVTSRGKR. Polar residues predominate over residues 636–645; it reads RSNVTSRGKR.

It belongs to the glycosyl hydrolase 13 family. GlgB subfamily. As to quaternary structure, monomer.

It catalyses the reaction Transfers a segment of a (1-&gt;4)-alpha-D-glucan chain to a primary hydroxy group in a similar glucan chain.. It participates in glycan biosynthesis; glycogen biosynthesis. Functionally, catalyzes the formation of the alpha-1,6-glucosidic linkages in glycogen by scission of a 1,4-alpha-linked oligosaccharide from growing alpha-1,4-glucan chains and the subsequent attachment of the oligosaccharide to the alpha-1,6 position. This is 1,4-alpha-glucan branching enzyme GlgB from Bacillus anthracis (strain CDC 684 / NRRL 3495).